Here is a 199-residue protein sequence, read N- to C-terminus: Dephospho-CoA kinase (199 aa).

In terms of domain architecture, DPCK spans valine 4–lysine 199. ATP is bound at residue alanine 12–threonine 17.

Belongs to the CoaE family.

The protein localises to the cytoplasm. The enzyme catalyses 3'-dephospho-CoA + ATP = ADP + CoA + H(+). Its pathway is cofactor biosynthesis; coenzyme A biosynthesis; CoA from (R)-pantothenate: step 5/5. Its function is as follows. Catalyzes the phosphorylation of the 3'-hydroxyl group of dephosphocoenzyme A to form coenzyme A. The protein is Dephospho-CoA kinase of Enterococcus faecalis (strain ATCC 700802 / V583).